The sequence spans 255 residues: Gene 54 protein (255 aa).

This Mycobacterium phage D29 (Mycobacteriophage D29) protein is Gene 54 protein (54).